The primary structure comprises 1142 residues: Nucleoporin nup131 (1142 aa).

It belongs to the nucleoporin Nup133 family. As to quaternary structure, component of the npc107-120 complex which consists of nup85, nup107, nup120, nup131, nup132 and seh1. Interacts with nup107.

The protein resides in the nucleus. Its function is as follows. Functions as a component of the nuclear pore complex (NPC). NPC components, collectively referred to as nucleoporins (NUPs), can play the role of both NPC structural components and of docking or interaction partners for transiently associated nuclear transport factors. Active directional transport is assured by both, a Phe-Gly (FG) repeat affinity gradient for these transport factors across the NPC and a transport cofactor concentration gradient across the nuclear envelope. This chain is Nucleoporin nup131 (nup131), found in Schizosaccharomyces pombe (strain 972 / ATCC 24843) (Fission yeast).